Reading from the N-terminus, the 376-residue chain is Small RNA 2'-O-methyltransferase (376 aa).

S-adenosyl-L-methionine-binding residues include threonine 49, aspartate 67, and serine 103. 4 residues coordinate Mg(2+): glutamate 121, glutamate 124, histidine 125, and histidine 171.

It belongs to the methyltransferase superfamily. HEN1 family. Mg(2+) is required as a cofactor.

It localises to the cytoplasm. It carries out the reaction small RNA 3'-end nucleotide + S-adenosyl-L-methionine = small RNA 3'-end 2'-O-methylnucleotide + S-adenosyl-L-homocysteine + H(+). Methyltransferase that adds a 2'-O-methyl group at the 3'-end of piRNAs, a class of 24 to 30 nucleotide RNAs that are generated by a Dicer-independent mechanism and are primarily derived from transposons and other repeated sequence elements. This probably protects the 3'-end of piRNAs from uridylation activity and subsequent degradation. Stabilization of piRNAs is essential for gametogenesis. The protein is Small RNA 2'-O-methyltransferase (HENMT1) of Gallus gallus (Chicken).